A 25-amino-acid chain; its full sequence is Chrysophsin-1 (25 aa).

Position 25 is a histidine amide (His25).

As to expression, gill. Localized in certain epithelial cells lining the surface of secondary lamellae and eosinophilic granule cell-like cells at the base of secondary lamellae.

It localises to the secreted. In terms of biological role, has antibacterial activity against Gram-positive bacteria B.subtilis ATCC 6633, L.garvieae ATCC 49156 and S.iniae F-8502, and Gram-negative bacteria E.coli WT-2, V.anguillarum ATCC 19264, V.penaeicida KHA, V.harveyi ATCC 14126, V.vulnificus ATCC 33148, A.salmonicida NCMB 1102 and P.putida ATCC 12633. Has hemolytic activity against human red blood cells. Seems to disrupt the membranes by adopting an alpha helical conformation. May play a significant role in innate host defense. This is Chrysophsin-1 from Pagrus major (Red sea bream).